A 197-amino-acid chain; its full sequence is dITP/XTP pyrophosphatase (197 aa).

Position 8–13 (8–13 (TGNPGK)) interacts with substrate. Mg(2+)-binding residues include glutamate 40 and aspartate 69. Aspartate 69 serves as the catalytic Proton acceptor. Substrate is bound by residues serine 70, 154–157 (FGYD), lysine 177, and 182–183 (HR).

It belongs to the HAM1 NTPase family. In terms of assembly, homodimer. Mg(2+) is required as a cofactor.

It carries out the reaction XTP + H2O = XMP + diphosphate + H(+). The enzyme catalyses dITP + H2O = dIMP + diphosphate + H(+). It catalyses the reaction ITP + H2O = IMP + diphosphate + H(+). Functionally, pyrophosphatase that catalyzes the hydrolysis of nucleoside triphosphates to their monophosphate derivatives, with a high preference for the non-canonical purine nucleotides XTP (xanthosine triphosphate), dITP (deoxyinosine triphosphate) and ITP. Seems to function as a house-cleaning enzyme that removes non-canonical purine nucleotides from the nucleotide pool, thus preventing their incorporation into DNA/RNA and avoiding chromosomal lesions. In Yersinia pestis, this protein is dITP/XTP pyrophosphatase.